Consider the following 166-residue polypeptide: 3-hydroxyacyl-[acyl-carrier-protein] dehydratase FabZ (166 aa).

Histidine 72 is a catalytic residue.

The protein belongs to the thioester dehydratase family. FabZ subfamily.

It localises to the cytoplasm. It carries out the reaction a (3R)-hydroxyacyl-[ACP] = a (2E)-enoyl-[ACP] + H2O. Involved in unsaturated fatty acids biosynthesis. Catalyzes the dehydration of short chain beta-hydroxyacyl-ACPs and long chain saturated and unsaturated beta-hydroxyacyl-ACPs. The chain is 3-hydroxyacyl-[acyl-carrier-protein] dehydratase FabZ from Synechococcus sp. (strain JA-2-3B'a(2-13)) (Cyanobacteria bacterium Yellowstone B-Prime).